We begin with the raw amino-acid sequence, 379 residues long: Alkanesulfonate monooxygenase (379 aa).

The protein belongs to the SsuD family.

It carries out the reaction an alkanesulfonate + FMNH2 + O2 = an aldehyde + FMN + sulfite + H2O + 2 H(+). In terms of biological role, catalyzes the desulfonation of aliphatic sulfonates. This is Alkanesulfonate monooxygenase from Pseudomonas syringae pv. syringae (strain B728a).